A 610-amino-acid chain; its full sequence is UvrABC system protein C (610 aa).

The 79-residue stretch at 16–94 (NQPGVYRMYN…IKQYLPKYNV (79 aa)) folds into the GIY-YIG domain. The region spanning 204-239 (NQVLSILVEKMEQASRELRFEDAAKARDQIQAIRRV) is the UVR domain.

The protein belongs to the UvrC family. In terms of assembly, interacts with UvrB in an incision complex.

The protein localises to the cytoplasm. Its function is as follows. The UvrABC repair system catalyzes the recognition and processing of DNA lesions. UvrC both incises the 5' and 3' sides of the lesion. The N-terminal half is responsible for the 3' incision and the C-terminal half is responsible for the 5' incision. The protein is UvrABC system protein C of Vibrio cholerae serotype O1 (strain ATCC 39315 / El Tor Inaba N16961).